Consider the following 349-residue polypeptide: DNA replication and repair protein RecF (349 aa).

30–37 (GKNGSGKT) serves as a coordination point for ATP.

The protein belongs to the RecF family.

The protein localises to the cytoplasm. In terms of biological role, the RecF protein is involved in DNA metabolism; it is required for DNA replication and normal SOS inducibility. RecF binds preferentially to single-stranded, linear DNA. It also seems to bind ATP. The polypeptide is DNA replication and repair protein RecF (Francisella tularensis subsp. novicida (strain U112)).